The primary structure comprises 1394 residues: ATP-dependent permease AUS1 (1394 aa).

Residues 1 to 420 lie on the Cytoplasmic side of the membrane; that stretch reads MSISKYFTPV…PLTTIGSYSR (420 aa). One can recognise an ABC transporter 1 domain in the interval 33-273; sequence KKSYDAEDSM…FRDTLGIEKD (241 aa). The next 6 helical transmembrane spans lie at 421 to 443, 468 to 490, 497 to 519, 529 to 551, 558 to 575, and 636 to 658; these read GSLT…PIAF, TVFD…YFLA, ARFF…LFAL, VANL…VIYL, FVWI…EAIL, and VWRN…LFAS. Residues 659-1080 are Cytoplasmic-facing; that stretch reads QYIKPYFNKD…QYICTKRDMT (422 aa). The 228-residue stretch at 751 to 978 folds into the ABC transporter 2 domain; that stretch reads ISWKNINYTV…YFMSHDNTLV (228 aa). Position 782-789 (782-789) interacts with ATP; it reads GESGAGKT. The next 6 helical transmembrane spans lie at 1081 to 1103, 1107 to 1129, 1156 to 1178, 1193 to 1215, 1224 to 1246, and 1346 to 1368; these read YVMA…FWHI, IIGL…PLIN, VLLL…LFFV, AGVF…LWLI, AAVF…QPYS, and FGIE…YLTY. The Cytoplasmic portion of the chain corresponds to 1369–1394; it reads VARIWPKVFKIITKVIPHRGKKPVQN.

It belongs to the ABC transporter superfamily. ABCG family. PDR (TC 3.A.1.205) subfamily.

The protein localises to the membrane. In terms of biological role, transporter involved in the uptake of sterol. The polypeptide is ATP-dependent permease AUS1 (AUS1) (Saccharomyces cerevisiae (strain ATCC 204508 / S288c) (Baker's yeast)).